Consider the following 232-residue polypeptide: uncharacterized protein (232 aa).

A signal peptide spans 1 to 32 (MTTSKIATAFKTATFALAAGAVALGLASPADA).

This is an uncharacterized protein from Mycobacterium bovis (strain ATCC BAA-935 / AF2122/97).